Here is a 185-residue protein sequence, read N- to C-terminus: Ribosome-recycling factor (185 aa).

This sequence belongs to the RRF family.

Its subcellular location is the cytoplasm. Responsible for the release of ribosomes from messenger RNA at the termination of protein biosynthesis. May increase the efficiency of translation by recycling ribosomes from one round of translation to another. In Listeria monocytogenes serotype 4a (strain HCC23), this protein is Ribosome-recycling factor.